The primary structure comprises 615 residues: Elongation factor 4 (615 aa).

The tr-type G domain maps to 17–198; it reads ASIRNFCIIA…RVSRTIPAPV (182 aa). GTP-binding positions include 29-34 and 145-148; these read DHGKST and NKID.

It belongs to the TRAFAC class translation factor GTPase superfamily. Classic translation factor GTPase family. LepA subfamily.

It is found in the cell membrane. The catalysed reaction is GTP + H2O = GDP + phosphate + H(+). Required for accurate and efficient protein synthesis under certain stress conditions. May act as a fidelity factor of the translation reaction, by catalyzing a one-codon backward translocation of tRNAs on improperly translocated ribosomes. Back-translocation proceeds from a post-translocation (POST) complex to a pre-translocation (PRE) complex, thus giving elongation factor G a second chance to translocate the tRNAs correctly. Binds to ribosomes in a GTP-dependent manner. The sequence is that of Elongation factor 4 from Clavibacter michiganensis subsp. michiganensis (strain NCPPB 382).